Consider the following 462-residue polypeptide: 23S rRNA (uracil(1939)-C(5))-methyltransferase RlmD (462 aa).

A TRAM domain is found at 6-76; it reads KSRKPQQPEY…KRLEEAEMVE (71 aa). Residues Cys-90, Cys-96, Cys-99, and Cys-178 each contribute to the [4Fe-4S] cluster site. S-adenosyl-L-methionine is bound by residues Gln-287, Phe-316, Asn-321, Glu-340, Asp-367, and Asp-388. Cys-414 serves as the catalytic Nucleophile.

It belongs to the class I-like SAM-binding methyltransferase superfamily. RNA M5U methyltransferase family. RlmD subfamily.

It carries out the reaction uridine(1939) in 23S rRNA + S-adenosyl-L-methionine = 5-methyluridine(1939) in 23S rRNA + S-adenosyl-L-homocysteine + H(+). Its function is as follows. Catalyzes the formation of 5-methyl-uridine at position 1939 (m5U1939) in 23S rRNA. In Acinetobacter baumannii (strain AB0057), this protein is 23S rRNA (uracil(1939)-C(5))-methyltransferase RlmD.